The chain runs to 282 residues: NH(3)-dependent NAD(+) synthetase (282 aa).

ATP is bound at residue 51–58 (GISGGVDS). Residue D57 participates in Mg(2+) binding. R148 is a binding site for deamido-NAD(+). T168 is a binding site for ATP. A Mg(2+)-binding site is contributed by E173. Deamido-NAD(+) contacts are provided by K181 and D188. The ATP site is built by K197 and T219. 268–269 (HK) is a binding site for deamido-NAD(+).

This sequence belongs to the NAD synthetase family. As to quaternary structure, homodimer.

It catalyses the reaction deamido-NAD(+) + NH4(+) + ATP = AMP + diphosphate + NAD(+) + H(+). It functions in the pathway cofactor biosynthesis; NAD(+) biosynthesis; NAD(+) from deamido-NAD(+) (ammonia route): step 1/1. Functionally, catalyzes the ATP-dependent amidation of deamido-NAD to form NAD. Uses ammonia as a nitrogen source. In Burkholderia ambifaria (strain MC40-6), this protein is NH(3)-dependent NAD(+) synthetase.